The chain runs to 470 residues: MATLNTRGNDIALNILSSTTESSQAVVLSRARGSPNSQRAWLFGLGTLGIILASVLLNPFTSTQESPLNIDPTDYAARTKHILSTTPLIDGHNDLPYLIRTELKHQIYNDRFTFNTGLLSNTDRKKLRDGMVGGQFWSAYIHCPKDSETNKDVPLDEATWTLRDTLEQIDITKRFVDEFPDLFQFCSNSSCAREAFANGKIGSFIGIEGAHQIGNSLASLRQLYDLGARYITTTHNCDNVFGTAASTVSAGGEDKGLTLFGEEYVAEMNRLGMMLDLSHVSHETMRDTLRLSEAPVIFSHTGAYALSKTLRFAPDDVLKATAEKGGIIMITFINRFLRPDDPDAATIHDVVDHIWHVAQVAGWDHVGVGSDFDGTPVTPRGLEDVSKYPRLVELLMERGATDDQIRKFAGDNILRVWSEVEKAAERIQVEGRKPNEAIWEGRTWVRSEMSPPIMFRDSIGRRIPSYLGEP.

A helical transmembrane segment spans residues alanine 40–phenylalanine 60. The Zn(2+) site is built by histidine 92 and aspartate 94. Residues cysteine 143 and cysteine 237 are joined by a disulfide bond. N-linked (GlcNAc...) asparagine glycosylation occurs at asparagine 188. Glutamate 208 serves as a coordination point for Zn(2+). Residue histidine 235 coordinates substrate. Histidine 279 and histidine 300 together coordinate Zn(2+). The substrate site is built by arginine 311 and aspartate 371.

This sequence belongs to the metallo-dependent hydrolases superfamily. Peptidase M19 family. Requires Zn(2+) as cofactor.

The protein resides in the membrane. The catalysed reaction is an L-aminoacyl-L-amino acid + H2O = 2 an L-alpha-amino acid. Hydrolyzes a wide range of dipeptides. The chain is Putative dipeptidase TSTA_079200 from Talaromyces stipitatus (strain ATCC 10500 / CBS 375.48 / QM 6759 / NRRL 1006) (Penicillium stipitatum).